Here is a 369-residue protein sequence, read N- to C-terminus: UPF0754 membrane protein Aflv_2299 (369 aa).

The next 2 helical transmembrane spans lie at 1–21 (MGLF…GGMT) and 347–367 (YLGA…TFFV).

This sequence belongs to the UPF0754 family.

The protein localises to the cell membrane. The polypeptide is UPF0754 membrane protein Aflv_2299 (Anoxybacillus flavithermus (strain DSM 21510 / WK1)).